Consider the following 49-residue polypeptide: Small, acid-soluble spore protein O (49 aa).

Positions Ala-23–Gln-49 are disordered.

The protein belongs to the SspO family.

Its subcellular location is the spore core. This is Small, acid-soluble spore protein O from Geobacillus thermodenitrificans (strain NG80-2).